A 344-amino-acid polypeptide reads, in one-letter code: L-rhamnose-proton symporter (344 aa).

Transmembrane regions (helical) follow at residues 4–24, 38–58, 68–88, 101–121, 137–157, 175–195, 214–234, 259–279, 290–310, and 321–341; these read AITM…CFYA, WSVG…ALLL, FNLS…IGNI, MGIG…TPII, TLLG…AGQL, LLLA…MNAA, LPSY…FCFI, ILLS…YAWG, MSWM…GLVL, and VAVL…VGLG.

The protein belongs to the L-rhamnose transporter (TC 2.A.7.6) family.

The protein resides in the cell inner membrane. It carries out the reaction L-rhamnopyranose(in) + H(+)(in) = L-rhamnopyranose(out) + H(+)(out). Its function is as follows. Uptake of L-rhamnose across the cytoplasmic membrane with the concomitant transport of protons into the cell (symport system). This is L-rhamnose-proton symporter from Salmonella paratyphi A (strain ATCC 9150 / SARB42).